The sequence spans 424 residues: Probable ribonuclease FAU-1 (424 aa).

Belongs to the FAU-1 family.

In terms of biological role, probable RNase involved in rRNA stability through maturation and/or degradation of precursor rRNAs. Binds to RNA in loop regions with AU-rich sequences. In Saccharolobus islandicus (strain L.S.2.15 / Lassen #1) (Sulfolobus islandicus), this protein is Probable ribonuclease FAU-1.